An 83-amino-acid chain; its full sequence is uncharacterized protein (83 aa).

This is an uncharacterized protein from Lactuca sativa (Garden lettuce).